We begin with the raw amino-acid sequence, 239 residues long: Orotidine 5'-phosphate decarboxylase (239 aa).

Substrate-binding positions include D11, K33, 60 to 69 (DLKLHDIPTT), T123, R185, Q194, G214, and R215. K62 (proton donor) is an active-site residue.

Belongs to the OMP decarboxylase family. Type 1 subfamily. As to quaternary structure, homodimer.

The enzyme catalyses orotidine 5'-phosphate + H(+) = UMP + CO2. Its pathway is pyrimidine metabolism; UMP biosynthesis via de novo pathway; UMP from orotate: step 2/2. Functionally, catalyzes the decarboxylation of orotidine 5'-monophosphate (OMP) to uridine 5'-monophosphate (UMP). The polypeptide is Orotidine 5'-phosphate decarboxylase (pyrF) (Bacillus subtilis (strain 168)).